The primary structure comprises 333 residues: Holliday junction branch migration complex subunit RuvB (333 aa).

The interval 1-182 (MDERLLSGES…FGVLSRLEYY (182 aa)) is large ATPase domain (RuvB-L). Residues leucine 21, arginine 22, glycine 63, lysine 66, threonine 67, threonine 68, 129–131 (EDF), arginine 172, tyrosine 182, and arginine 219 contribute to the ATP site. Position 67 (threonine 67) interacts with Mg(2+). The interval 183 to 253 (TVDQLSAIVE…ITQMALELLQ (71 aa)) is small ATPAse domain (RuvB-S). A head domain (RuvB-H) region spans residues 256 to 333 (KLGLDHIDHK…EHFGMEIPKV (78 aa)). The DNA site is built by arginine 311 and arginine 316.

This sequence belongs to the RuvB family. As to quaternary structure, homohexamer. Forms an RuvA(8)-RuvB(12)-Holliday junction (HJ) complex. HJ DNA is sandwiched between 2 RuvA tetramers; dsDNA enters through RuvA and exits via RuvB. An RuvB hexamer assembles on each DNA strand where it exits the tetramer. Each RuvB hexamer is contacted by two RuvA subunits (via domain III) on 2 adjacent RuvB subunits; this complex drives branch migration. In the full resolvosome a probable DNA-RuvA(4)-RuvB(12)-RuvC(2) complex forms which resolves the HJ.

The protein resides in the cytoplasm. The enzyme catalyses ATP + H2O = ADP + phosphate + H(+). Functionally, the RuvA-RuvB-RuvC complex processes Holliday junction (HJ) DNA during genetic recombination and DNA repair, while the RuvA-RuvB complex plays an important role in the rescue of blocked DNA replication forks via replication fork reversal (RFR). RuvA specifically binds to HJ cruciform DNA, conferring on it an open structure. The RuvB hexamer acts as an ATP-dependent pump, pulling dsDNA into and through the RuvAB complex. RuvB forms 2 homohexamers on either side of HJ DNA bound by 1 or 2 RuvA tetramers; 4 subunits per hexamer contact DNA at a time. Coordinated motions by a converter formed by DNA-disengaged RuvB subunits stimulates ATP hydrolysis and nucleotide exchange. Immobilization of the converter enables RuvB to convert the ATP-contained energy into a lever motion, pulling 2 nucleotides of DNA out of the RuvA tetramer per ATP hydrolyzed, thus driving DNA branch migration. The RuvB motors rotate together with the DNA substrate, which together with the progressing nucleotide cycle form the mechanistic basis for DNA recombination by continuous HJ branch migration. Branch migration allows RuvC to scan DNA until it finds its consensus sequence, where it cleaves and resolves cruciform DNA. The chain is Holliday junction branch migration complex subunit RuvB from Bacillus cereus (strain B4264).